The following is a 541-amino-acid chain: Protein ST7 homolog (541 aa).

A helical transmembrane segment spans residues 15–35 (FYVALTGTSSLISGLILIFEW). The segment at 62 to 116 (DAQSDSSNGSGSSTSSGSSSSSNGGGGGGGGGAGGGGPGAGGGTNSTTTTGTQMP) is disordered. The segment covering 67–83 (SSNGSGSSTSSGSSSSS) has biased composition (low complexity). The segment covering 84 to 105 (NGGGGGGGGGAGGGGPGAGGGT) has biased composition (gly residues). A helical membrane pass occupies residues 476–496 (LPFFILFTAGLCSFTALLALL).

It belongs to the ST7 family.

It is found in the membrane. The polypeptide is Protein ST7 homolog (Drosophila pseudoobscura pseudoobscura (Fruit fly)).